We begin with the raw amino-acid sequence, 1030 residues long: Calcium-transporting ATPase 4, plasma membrane-type (1030 aa).

Residues M1–S157 lie on the Cytoplasmic side of the membrane. The interval A19 to V30 is interaction with calmodulin. Position 28 is a phosphoserine (S28). A helical transmembrane segment spans residues F158–A178. Residues V179–Y196 lie on the Lumenal side of the membrane. A helical transmembrane segment spans residues D197–Y217. Over K218–L345 the chain is Cytoplasmic. A helical transmembrane segment spans residues N346–V365. At V366–Y395 the chain is on the lumenal side. Residues F396–L413 form a helical membrane-spanning segment. At A414 to I804 the chain is on the cytoplasmic side. D451 serves as the catalytic 4-aspartylphosphate intermediate. Mg(2+) contacts are provided by D749 and D753. The helical transmembrane segment at Q805–F823 threads the bilayer. The Lumenal portion of the chain corresponds to V824–L834. A helical transmembrane segment spans residues T835–A855. Residues T856–F875 are Cytoplasmic-facing. Residues I876–L898 form a helical membrane-spanning segment. The Lumenal portion of the chain corresponds to N899–G910. Residues P911 to N932 form a helical membrane-spanning segment. Topologically, residues E933–N950 are cytoplasmic. Residues S951 to L972 form a helical membrane-spanning segment. Residues G973–S982 are Lumenal-facing. Residues W983–K1004 traverse the membrane as a helical segment. The Cytoplasmic portion of the chain corresponds to C1005–A1030.

Belongs to the cation transport ATPase (P-type) (TC 3.A.3) family. Type IIB subfamily.

The protein resides in the vacuole membrane. It carries out the reaction Ca(2+)(in) + ATP + H2O = Ca(2+)(out) + ADP + phosphate + H(+). Its activity is regulated as follows. Activated by calmodulin. In terms of biological role, this magnesium-dependent enzyme catalyzes the hydrolysis of ATP coupled with the translocation of calcium from the cytosol into small vacuoles. The polypeptide is Calcium-transporting ATPase 4, plasma membrane-type (ACA4) (Arabidopsis thaliana (Mouse-ear cress)).